Consider the following 396-residue polypeptide: Elongation factor Tu (396 aa).

One can recognise a tr-type G domain in the interval 10 to 206; the sequence is KEHVNIGTIG…AVDTWIETPV (197 aa). A G1 region spans residues 19-26; it reads GHVDHGKT. Position 19–26 (19–26) interacts with GTP; the sequence is GHVDHGKT. Thr-26 lines the Mg(2+) pocket. The tract at residues 60 to 64 is G2; the sequence is GITIN. Positions 81-84 are G3; the sequence is DCPG. Residues 81-85 and 136-139 contribute to the GTP site; these read DCPGH and NKCD. The interval 136–139 is G4; sequence NKCD. Positions 176–178 are G5; sequence SAL.

This sequence belongs to the TRAFAC class translation factor GTPase superfamily. Classic translation factor GTPase family. EF-Tu/EF-1A subfamily. As to quaternary structure, monomer.

It is found in the cytoplasm. It carries out the reaction GTP + H2O = GDP + phosphate + H(+). Its function is as follows. GTP hydrolase that promotes the GTP-dependent binding of aminoacyl-tRNA to the A-site of ribosomes during protein biosynthesis. This is Elongation factor Tu from Mycoplasmopsis agalactiae (strain NCTC 10123 / CIP 59.7 / PG2) (Mycoplasma agalactiae).